The following is a 182-amino-acid chain: Alpha-S2-casein (182 aa).

The N-terminal stretch at 1–15 is a signal peptide; the sequence is MKFFIFTCLLAVALA. A phosphoserine mark is found at S22, S23, and S24.

It belongs to the alpha-casein family. As to expression, mammary gland specific. Secreted in milk.

Its subcellular location is the secreted. In terms of biological role, important role in the capacity of milk to transport calcium phosphate. The sequence is that of Alpha-S2-casein (CSN1S2) from Oryctolagus cuniculus (Rabbit).